A 219-amino-acid polypeptide reads, in one-letter code: Tetratricopeptide repeat protein 9A (219 aa).

The segment at 1 to 49 (MERKGLAARSSGNPSPPALGEGPRPVPPPCVPSGGGAPERGQAGTAAEP) is disordered. A TPR 1 repeat occupies 56-89 (AHEFKSQGAQCYKDKKFREAIGKYHRALLELKGL). Positions 94 to 115 (EERDARPASSAGVPKSSRLSEE) are disordered. S102 carries the phosphoserine modification. TPR repeat units lie at residues 125–160 (IDCY…EGEN) and 161–194 (FKAL…QPTD).

Belongs to the TTC9 family.

The protein is Tetratricopeptide repeat protein 9A (Ttc9) of Mus musculus (Mouse).